A 441-amino-acid polypeptide reads, in one-letter code: Tryptophan aminotransferase-related protein 1 (441 aa).

Pyridoxal 5'-phosphate-binding positions include Y110, 152–153 (ST), N219, 239–242 (DLAY), 262–265 (TVSK), and R273. K265 carries the N6-(pyridoxal phosphate)lysine modification.

This sequence belongs to the alliinase family. Requires pyridoxal 5'-phosphate as cofactor. In terms of tissue distribution, highly expressed in anthers. Expressed at low levels in ovaries.

It carries out the reaction L-tryptophan + 2-oxoglutarate = indole-3-pyruvate + L-glutamate. It participates in plant hormone metabolism; auxin biosynthesis. In terms of biological role, probable tryptophan aminotransferase that may be involved in the regulation of auxin production in developing rice grains. The polypeptide is Tryptophan aminotransferase-related protein 1 (Oryza sativa subsp. japonica (Rice)).